The sequence spans 532 residues: Glucose-6-phosphate isomerase (532 aa).

Glu-330 serves as the catalytic Proton donor. Catalysis depends on residues His-359 and Lys-461.

It belongs to the GPI family.

The protein resides in the cytoplasm. The catalysed reaction is alpha-D-glucose 6-phosphate = beta-D-fructose 6-phosphate. It functions in the pathway carbohydrate biosynthesis; gluconeogenesis. Its pathway is carbohydrate degradation; glycolysis; D-glyceraldehyde 3-phosphate and glycerone phosphate from D-glucose: step 2/4. Functionally, catalyzes the reversible isomerization of glucose-6-phosphate to fructose-6-phosphate. This Synechococcus sp. (strain CC9605) protein is Glucose-6-phosphate isomerase.